Reading from the N-terminus, the 253-residue chain is Leucyl/phenylalanyl-tRNA--protein transferase (253 aa).

Belongs to the L/F-transferase family.

The protein localises to the cytoplasm. The enzyme catalyses N-terminal L-lysyl-[protein] + L-leucyl-tRNA(Leu) = N-terminal L-leucyl-L-lysyl-[protein] + tRNA(Leu) + H(+). The catalysed reaction is N-terminal L-arginyl-[protein] + L-leucyl-tRNA(Leu) = N-terminal L-leucyl-L-arginyl-[protein] + tRNA(Leu) + H(+). It carries out the reaction L-phenylalanyl-tRNA(Phe) + an N-terminal L-alpha-aminoacyl-[protein] = an N-terminal L-phenylalanyl-L-alpha-aminoacyl-[protein] + tRNA(Phe). In terms of biological role, functions in the N-end rule pathway of protein degradation where it conjugates Leu, Phe and, less efficiently, Met from aminoacyl-tRNAs to the N-termini of proteins containing an N-terminal arginine or lysine. This is Leucyl/phenylalanyl-tRNA--protein transferase from Bordetella petrii (strain ATCC BAA-461 / DSM 12804 / CCUG 43448).